The chain runs to 545 residues: Oligopeptide-binding protein OppA (545 aa).

An N-terminal signal peptide occupies residues 1–20; that stretch reads MKKRWSIVTLMLIFTLVLSA. C21 is lipidated: N-palmitoyl cysteine. Residue C21 is the site of S-diacylglycerol cysteine attachment. Phosphothreonine is present on T470.

This sequence belongs to the bacterial solute-binding protein 5 family. The complex is composed of two ATP-binding proteins (OppD and OppF), two transmembrane proteins (OppB and OppC) and a solute-binding protein (OppA). OppA interacts with FloT in detergent-resistant membranes (DRM). Colocalizes rarely with FloT membrane assemblies.

The protein resides in the cell membrane. Its subcellular location is the membrane raft. Part of the ABC transporter complex OppABCDF involved in the uptake of oligopeptides. Plays an important nutritional role. Binds peptides containing up to five amino acids residues regardless of their sequence, with highest affinity for tetra- and pentapeptides. Binds to the sporulation-promoting peptide PhrE (Ser-Arg-Asn-Val-Thr). Required for sporulation and genetic competence. This chain is Oligopeptide-binding protein OppA, found in Bacillus subtilis (strain 168).